The primary structure comprises 425 residues: MKAFLVGGAVRDRLLGLPVRERDWVVVGESPETMIARGFRPVGRDFPVFLHPETHEEYALARTERKTAPGYRGFVVHAAPDVTLEQDLERRDLTINAMAETPDGRLVDPFGGRRDLEARLLRHVSSAFAEDPVRILRVARFTARLTPLGFRVAPETLVEMRRMVEAGEVDALVPERVWAEFAKALAEPAPSAFFRTLRDCGALKRLFPEIERLFGVPQPPRHHPEIDTGVHTLMVLDQAARLTADPSARFAALTHDLGKALTPPELWPSHRGHERLGLGALNTLCDRFRAPNAFRRLAEKVMRYHGLCHRAAELRTSTLVDLLDRLGALKRHDDTLEPFLLACEADARGRAGFEERPYPQADWLREAQRAAVSVDSRPLIEQRLQGPAFGRALRQLRIAAVRRLRAARSPATPAGRLPHPQGEGE.

2 residues coordinate ATP: G8 and R11. CTP-binding residues include G8 and R11. Mg(2+) is bound by residues E21 and D23. R91, R137, and R140 together coordinate ATP. Positions 91, 137, and 140 each coordinate CTP. Residues 228–329 (TGVHTLMVLD…VDLLDRLGAL (102 aa)) form the HD domain.

This sequence belongs to the tRNA nucleotidyltransferase/poly(A) polymerase family. Bacterial CCA-adding enzyme type 1 subfamily. As to quaternary structure, monomer. Can also form homodimers and oligomers. It depends on Mg(2+) as a cofactor. Ni(2+) is required as a cofactor.

The enzyme catalyses a tRNA precursor + 2 CTP + ATP = a tRNA with a 3' CCA end + 3 diphosphate. It catalyses the reaction a tRNA with a 3' CCA end + 2 CTP + ATP = a tRNA with a 3' CCACCA end + 3 diphosphate. Catalyzes the addition and repair of the essential 3'-terminal CCA sequence in tRNAs without using a nucleic acid template. Adds these three nucleotides in the order of C, C, and A to the tRNA nucleotide-73, using CTP and ATP as substrates and producing inorganic pyrophosphate. tRNA 3'-terminal CCA addition is required both for tRNA processing and repair. Also involved in tRNA surveillance by mediating tandem CCA addition to generate a CCACCA at the 3' terminus of unstable tRNAs. While stable tRNAs receive only 3'-terminal CCA, unstable tRNAs are marked with CCACCA and rapidly degraded. This is Multifunctional CCA protein from Methylococcus capsulatus (strain ATCC 33009 / NCIMB 11132 / Bath).